A 424-amino-acid chain; its full sequence is Double homeobox protein 4 (424 aa).

Over residues 1–10 (MALPTPSDST) the composition is skewed to polar residues. Disordered regions lie at residues 1–24 (MALPTPSDSTLPAEARGRGRRRRL), 72–102 (SRQLRQHRRESRPWPGRRGPPEGRRKRTAVT), 218–362 (LQPS…LQEP), and 388–414 (QPLLETEAPGELEASEEAASLEAPLSE). 2 DNA-binding regions (homeobox) span residues 19 to 78 (GRRR…LRQH) and 94 to 153 (GRRK…PGQG). Positions 265–274 (KSREDRDPQR) are enriched in basic and acidic residues. 2 stretches are compositionally biased toward low complexity: residues 278–302 (PGPCAVAQPGPAQAGPQGQGVLAPP) and 319–329 (AGAAWEPQAGA). Residues 327–424 (AGAAPPPQPA…EEYRALLEEL (98 aa)) are required for interaction with EP300 and CREBBP, and for transcriptional activation of target genes. The important for transcriptional activation of target genes stretch occupies residues 405–424 (AASLEAPLSEEEYRALLEEL).

Belongs to the paired homeobox family. In terms of assembly, binds DNA as a monomer. Interacts (via C-terminus) with EP300 and CREBBP. As to expression, isoform 1: Does not seem to be expressed in normal muscle, but is detected in muscle of individuals with FSHD, and also in testis (at protein level). Isoform 1: Does not seem to be expressed in normal muscle, but in muscle of individuals with FSHD, where it may be toxic to cells. Isoform 2: Detected in skeletal muscle, fibroblasts and testis from healthy individuals.

The protein localises to the nucleus. It is found in the cytoplasm. Functionally, transcription factor that is selectively and transiently expressed in cleavage-stage embryos. Binds to double-stranded DNA elements with the consensus sequence 5'-TAATCTAATCA-3'. Binds to chromatin containing histone H3 acetylated at 'Lys-27' (H3K27ac) and promotes deacetylation of H3K27ac. In parallel, binds to chromatin that lacks histone H3 acetylation at 'Lys-27' (H3K27ac) and recruits EP300 and CREBBP to promote acetylation of histone H3 at 'Lys-27' at new sites. Involved in transcriptional regulation of numerous genes, primarily as transcriptional activator, but also mediates repression of a set of target genes. Promotes expression of ZSCAN4 and KDM4E, two proteins with essential roles during early embryogenesis. Promotes nuclear translocation of CTNNB1/beta-catenin and its subsequent activation of target genes. Heterologous expression in cultured embryonic stem cells mediates transcription of HERVL retrotransposons and transcripts derived from ACRO1 and HSATII satellite repeats. May activate expression of PITX1. May regulate microRNA (miRNA) expression. Inappropriate expression can inhibit myogenesis and promote apoptosis. In terms of biological role, probably inactive as a transcriptional activator, due to the absence of the C-terminal region that is important for transcriptional activation. Can inhibit transcriptional activation mediated by isoform 1. Heterologous expression of isoform 2 has no deleterious effect on cell survival. The sequence is that of Double homeobox protein 4 from Homo sapiens (Human).